The primary structure comprises 1947 residues: MENSNSEASAVWNPALRTDDNHETAATVEEISAPVSSDVAPLTPKATTANTDIVPDAIDSINTESPAREETAELPLNEHTHTVPGAAEPVNVGSAGFIETAEAPPTAIDDPGAVPVAVSPNGETSAPAIATDVTSVSENTVPDVTESSSVEPTALIEIAQAESATGEDFNQAETREEFREEAAELFSAAADENQETDAFKPQAELAAAPGDGYNNLQSMQEEHVQEGQTHQLEIDTSVNAAQGSSDYPTPGWVYQQGIADHATPIDGELRSTNHDLWGSPKSVDNGEDRFFDQLRTQTKPIYFPSEESRFEEGVPLLDGSAEAPVEAAPVEATPVEQAVPQPGQLDRVFEGDEDEDDGFFSSAQQPATENEPQEPVHIQRKSTSQVLDSLNTNRDGVHSPLSPTAEEFNDIIAAAASKSPENVQEPASEEDLAARWQAELSDDDLEVAPVEEDLAAKWQAELDDDDLLLEDEPSDLAQNTAAEVVNGHGVEPNLQALGSPFGTPQNPSKPKPAQSVYTPHQPSTADLVQSVPIPGATPLSSSAPYSTSYFQPRPEPPAPAVRAESFAERPKEGYKSPYDLPEDLAPRRKPATKPVVSSAANVPAPPPRSSSFTAPPPPQSSSGVPVPPINAATLPPASKPNAPVASAPKNFYEELPLPPVRPRSRPAESGRYTPKFNTASPAFVQPPPAAHPVTNPYAQLSGDTPQSQLQQPEKLGPYANNVGSSSQSAPAVPPINSRYSPKPPTLQPGVKPPASPRYSPAPPPPAAASAPLQRYTSQPSVIPGQTVTLPFQPRTSSPLAHHEKVSYQPNEASRKPSFPQPTSPVTGQPSHTETAAPMSPRSSQVQASGPSAVDTSSSYQQTSPPRNPYAPPSYLEEFSRRVSHVNNSTPSAYTPPPETPPFVPPRRSQTQSPTQQQSGPRLSVPSVDPLKRPASVHAPSSPTKTSHTYAPMQPSSHIRTISQSLEFIPPSDGQELDPLQRWKGAPIFKFGFGGTVLSSFPKHVPRYSAGQTAPKIKPMPGDVKTTQLKDVISFPETIVRHPGPLRNKSKKKDLVAWLSSRIAAFENEGVPQNLQAYPDSYKRRDEKILLWKAVRVLVEHDGGMQSTPDLQEALRGILFPHLQTNGLEPMYSDSLQSFGAEVINASSLSDSAESKPLSSIRNNLLIGEREKAVWSAADNRLWGHAMIIASTLDKSIWKQVVQEFVRREVRSNSGNPESLAALYEIFAGNFEESVDELVPPSARAGLQMVSKVDGHGPSKDALAGLESWKDTLGLVLSNRSPEDHRALLALGRLLLSYGRIEAAHICLIFSRAAVFGGPDDPQASIVLLGVDHVHSSPTALLDDDAILLTEAYEYATSVLGASPTSTLPHLLALKLVHAWSLTDQGRKSEAQQYCDAITAALKATTKQSGYHHQHLFFGVDELSARLKQTTGDGGSWISKPSMEKVSSSMWNKFSNFVAGDDSDAASTGSGKGGETGFGPFAQISGTPTVSRSPSVTDLYGQYPMPVAQQVPGAGTSRYQPNNQNAPNSSPDQGRGRSSLDSQRSASFGLSYGQRRGSQEYGHPSESPMYGGGPFYGSPTAGYQSTPPQTSYMPLAPVEEDMAQQAYTPPTATPQGLFGHDLPYQPPAQNPFDQSTGPEAPASQHTEADGYMPPTGNTGYEPPASNTLEVEVTEESEDEKPRKKLTMDDEDDDDIAARAEALKKAEKARKDREADEAFRKAAEADAKKPAPAKSSWWGWIKGGNKEEANSGKPIRAKLGEESSFYYDKELKKWVNKKDPNSATPARATPPPPKAMGPPSRAASGSSMPPSGTAGLGSRPPSVAPPPSGSPAPSSLGLPPTPGLGPARSASTGAVPPAGNASSRPGSSAGPPPRPSTSLSHASSIDDLLGAPQARKGATSRGRKKGRIRDLPHLAYRSVYPCIANYQPPYIVVNLHAISSGSMAWLLVL.

Disordered regions lie at residues 1–57 (MENS…VPDA), 347–385 (RVFEGDEDEDDGFFSSAQQPATENEPQEPVHIQRKSTSQ), 465–956 (DDLL…QPSS), 1462–1760 (SDAA…LGEE), and 1773–1904 (VNKK…RKKG). Over residues 361 to 370 (SSAQQPATEN) the composition is skewed to polar residues. A compositionally biased stretch (acidic residues) spans 465 to 474 (DDLLLEDEPS). 2 stretches are compositionally biased toward polar residues: residues 515 to 527 (SVYTPHQPSTADL) and 538 to 550 (PLSSSAPYSTSYF). Basic and acidic residues predominate over residues 565–574 (SFAERPKEGY). The span at 603-619 (PAPPPRSSSFTAPPPPQ) shows a compositional bias: pro residues. The segment covering 696–711 (PYAQLSGDTPQSQLQQ) has biased composition (polar residues). Pro residues predominate over residues 741–766 (PKPPTLQPGVKPPASPRYSPAPPPPA). Composition is skewed to polar residues over residues 774 to 798 (RYTSQPSVIPGQTVTLPFQPRTSSP), 823 to 833 (SPVTGQPSHTE), and 840 to 864 (PRSSQVQASGPSAVDTSSSYQQTSP). The span at 893-904 (YTPPPETPPFVP) shows a compositional bias: pro residues. A compositionally biased stretch (low complexity) spans 905–918 (PRRSQTQSPTQQQS). Composition is skewed to polar residues over residues 938–956 (APSSPTKTSHTYAPMQPSS) and 1483–1495 (ISGTPTVSRSPSV). Positions 1519-1530 (QPNNQNAPNSSP) are enriched in low complexity. 3 stretches are compositionally biased toward polar residues: residues 1538–1547 (SLDSQRSASF), 1580–1591 (AGYQSTPPQTSY), and 1604–1613 (QAYTPPTATP). Positions 1694 to 1727 (IAARAEALKKAEKARKDREADEAFRKAAEADAKK) are enriched in basic and acidic residues. The span at 1854-1867 (PPAGNASSRPGSSA) shows a compositional bias: low complexity.

Belongs to the SEC16 family.

It localises to the endoplasmic reticulum membrane. In terms of biological role, involved in the initiation of assembly of the COPII coat required for the formation of transport vesicles from the endoplasmic reticulum (ER) and the selection of cargo molecules. Also involved in autophagy. The protein is COPII coat assembly protein sec16 (sec16) of Emericella nidulans (strain FGSC A4 / ATCC 38163 / CBS 112.46 / NRRL 194 / M139) (Aspergillus nidulans).